Consider the following 875-residue polypeptide: Aminopeptidase M1-B (875 aa).

The interval 96–203 (IGEGVLKMDF…MSTYLVAIVV (108 aa)) is required for membrane association. Residues Glu136 and 269–273 (GAMEN) each bind substrate. His305 lines the Zn(2+) pocket. Glu306 serves as the catalytic Proton acceptor. Residues His309 and Glu328 each coordinate Zn(2+). The Dileucine internalization motif signature appears at 722-723 (LL).

This sequence belongs to the peptidase M1 family. Homodimer. Zn(2+) is required as a cofactor.

Its subcellular location is the membrane. It is found in the microsome membrane. The protein resides in the cytoplasm. The enzyme catalyses Release of an N-terminal amino acid, Xaa-|-Yaa- from a peptide, amide or arylamide. Xaa is preferably Ala, but may be most amino acids including Pro (slow action). When a terminal hydrophobic residue is followed by a prolyl residue, the two may be released as an intact Xaa-Pro dipeptide.. The protein is Aminopeptidase M1-B of Oryza sativa subsp. japonica (Rice).